Consider the following 366-residue polypeptide: Isocitrate dehydrogenase [NAD] subunit alpha, mitochondrial (366 aa).

A mitochondrion-targeting transit peptide spans 1–27; the sequence is MAGPAWISKVSRLLGAFHNQKQVTRGF. Lysine 77 is modified (N6-succinyllysine). A Phosphothreonine modification is found at threonine 101. Residues arginine 115, arginine 125, and arginine 146 each contribute to the substrate site. The residue at position 223 (lysine 223) is an N6-acetyllysine. Mg(2+)-binding residues include aspartate 233, aspartate 257, and aspartate 261. Lysine 343 carries the N6-acetyllysine; alternate modification. Lysine 343 is subject to N6-succinyllysine; alternate. At lysine 350 the chain carries N6-succinyllysine.

This sequence belongs to the isocitrate and isopropylmalate dehydrogenases family. Heterooligomer of subunits alpha (IDH3A), beta (IDH3B), and gamma (IDH3G) in the apparent ratio of 2:1:1. The heterodimer containing one IDH3A and one IDH3B subunit and the heterodimer containing one IDH3A and one IDH3G subunit assemble into a heterotetramer (which contains two subunits of IDH3A, one of IDH3B and one of IDH3G) and further into the heterooctamer. The cofactor is Mg(2+). It depends on Mn(2+) as a cofactor.

It localises to the mitochondrion. It carries out the reaction D-threo-isocitrate + NAD(+) = 2-oxoglutarate + CO2 + NADH. With respect to regulation, the heterotetramer and the heterodimer composed of IDH3A and IDH3G subunits can be allosterically activated by citrate (CIT) or/and ADP, and the two activators can act independently or synergistically. The heterodimer composed of IDH3A and IDH3B subunits cannot be allosterically regulated and the allosteric regulation of the heterotetramer is through the IDH3G subunit and not the IDH3B subunit. The IDH3G subunit contains the allosteric site which consists of a CIT-binding site and an ADP-binding site, and the binding of CIT and ADP causes conformational changes at the allosteric site which are transmitted to the active site in the catalytic subunit (IDH3A) through a cascade of conformational changes at the heterodimer interface, leading to stabilization of the isocitrate-binding at the active site and thus activation of the enzyme. ATP can activate the heterotetramer and the heterodimer composed of IDH3A and IDH3G subunits at low concentrations but inhibits their activities at high concentrations, whereas ATP exhibits only inhibitory effect on the heterodimer composed of IDH3A and IDH3B subunits. Catalytic subunit of the enzyme which catalyzes the decarboxylation of isocitrate (ICT) into alpha-ketoglutarate. The heterodimer composed of the alpha (IDH3A) and beta (IDH3B) subunits and the heterodimer composed of the alpha (IDH3A) and gamma (IDH3G) subunits, have considerable basal activity but the full activity of the heterotetramer (containing two subunits of IDH3A, one of IDH3B and one of IDH3G) requires the assembly and cooperative function of both heterodimers. The protein is Isocitrate dehydrogenase [NAD] subunit alpha, mitochondrial of Bos taurus (Bovine).